An 87-amino-acid chain; its full sequence is Small ribosomal subunit protein uS15 (87 aa).

It belongs to the universal ribosomal protein uS15 family. As to quaternary structure, part of the 30S ribosomal subunit. Forms a bridge to the 50S subunit in the 70S ribosome, contacting the 23S rRNA.

In terms of biological role, one of the primary rRNA binding proteins, it binds directly to 16S rRNA where it helps nucleate assembly of the platform of the 30S subunit by binding and bridging several RNA helices of the 16S rRNA. Forms an intersubunit bridge (bridge B4) with the 23S rRNA of the 50S subunit in the ribosome. This is Small ribosomal subunit protein uS15 from Dehalococcoides mccartyi (strain ATCC BAA-2266 / KCTC 15142 / 195) (Dehalococcoides ethenogenes (strain 195)).